A 102-amino-acid chain; its full sequence is Cytochrome c3 (102 aa).

Heme c is bound by residues histidine 26, histidine 29, cysteine 34, cysteine 37, histidine 38, histidine 39, cysteine 50, cysteine 55, histidine 56, histidine 73, cysteine 81, cysteine 84, histidine 85, cysteine 95, cysteine 98, and histidine 99.

Requires heme as cofactor.

It is found in the periplasm. Participates in sulfate respiration coupled with phosphorylation by transferring electrons from the enzyme dehydrogenase to ferredoxin. The polypeptide is Cytochrome c3 (Desulfovibrio desulfuricans).